The chain runs to 207 residues: Large ribosomal subunit protein uL4 (207 aa).

The disordered stretch occupies residues 53–76 (NRSAVRGGGRKPWRQKGTGRARQG). A compositionally biased stretch (basic residues) spans 60 to 71 (GGRKPWRQKGTG).

It belongs to the universal ribosomal protein uL4 family. In terms of assembly, part of the 50S ribosomal subunit.

Functionally, one of the primary rRNA binding proteins, this protein initially binds near the 5'-end of the 23S rRNA. It is important during the early stages of 50S assembly. It makes multiple contacts with different domains of the 23S rRNA in the assembled 50S subunit and ribosome. In terms of biological role, forms part of the polypeptide exit tunnel. The chain is Large ribosomal subunit protein uL4 from Staphylococcus saprophyticus subsp. saprophyticus (strain ATCC 15305 / DSM 20229 / NCIMB 8711 / NCTC 7292 / S-41).